The chain runs to 176 residues: Nuclear transcription factor Y subunit B-10 (176 aa).

Residues 1-15 show a composition bias toward gly residues; it reads MAESQTGGGGGGSHE. Positions 1 to 29 are disordered; the sequence is MAESQTGGGGGGSHESGGDQSPRSLNVRE. Ala-2 is modified (N-acetylalanine). The DNA-binding element occupies 34-40; it reads LPIANIS. Positions 61–72 are subunit association domain (SAD); the sequence is MQECVSEFISFV. Residues 121–176 form a disordered region; that stretch reads GDTKGSGKGGESSAKRDGQPSQVSQFSQVPQQGSFSQGPYGNSQGSNMMVQMPGTE. Positions 139–159 are enriched in low complexity; the sequence is QPSQVSQFSQVPQQGSFSQGP. Positions 160–169 are enriched in polar residues; the sequence is YGNSQGSNMM.

This sequence belongs to the NFYB/HAP3 subunit family. As to quaternary structure, heterotrimeric transcription factor composed of three components, NF-YA, NF-YB and NF-YC. NF-YB and NF-YC must interact and dimerize for NF-YA association and DNA binding. In terms of tissue distribution, expressed in the whole plant, except roots.

It is found in the nucleus. In terms of biological role, component of the NF-Y/HAP transcription factor complex. The NF-Y complex stimulates the transcription of various genes by recognizing and binding to a CCAAT motif in promoters. The chain is Nuclear transcription factor Y subunit B-10 (NFYB10) from Arabidopsis thaliana (Mouse-ear cress).